The primary structure comprises 345 residues: DNA-directed RNA polymerases I and III subunit rpac1 (345 aa).

A compositionally biased stretch (polar residues) spans 1–11 (MVNKSTTNGVS). Residues 1–20 (MVNKSTTNGVSDPNLENKRT) are disordered.

It belongs to the archaeal Rpo3/eukaryotic RPB3 RNA polymerase subunit family. In terms of assembly, component of the RNA polymerase I (Pol I) and RNA polymerase III (Pol III) complexes consisting of at least 13 and 17 subunits, respectively. Interacts with RPAC19/RPAC2.

It localises to the nucleus. Its function is as follows. DNA-dependent RNA polymerase catalyzes the transcription of DNA into RNA using the four ribonucleoside triphosphates as substrates. Common component of RNA polymerases I and III which synthesize ribosomal RNA precursors and small RNAs, such as 5S rRNA and tRNAs, respectively. RPAC1 is part of the Pol core element with the central large cleft and probably a clamp element that moves to open and close the cleft. In Dictyostelium discoideum (Social amoeba), this protein is DNA-directed RNA polymerases I and III subunit rpac1 (polr1c).